Reading from the N-terminus, the 475-residue chain is Glutamyl-tRNA(Gln) amidotransferase subunit A (475 aa).

Residues Lys69 and Ser144 each act as charge relay system in the active site. Ser168 acts as the Acyl-ester intermediate in catalysis.

Belongs to the amidase family. GatA subfamily. Heterotrimer of A, B and C subunits.

It carries out the reaction L-glutamyl-tRNA(Gln) + L-glutamine + ATP + H2O = L-glutaminyl-tRNA(Gln) + L-glutamate + ADP + phosphate + H(+). Its function is as follows. Allows the formation of correctly charged Gln-tRNA(Gln) through the transamidation of misacylated Glu-tRNA(Gln) in organisms which lack glutaminyl-tRNA synthetase. The reaction takes place in the presence of glutamine and ATP through an activated gamma-phospho-Glu-tRNA(Gln). The chain is Glutamyl-tRNA(Gln) amidotransferase subunit A from Methanosarcina barkeri (strain Fusaro / DSM 804).